The following is a 401-amino-acid chain: Na(+)/H(+) antiporter NhaA 2 (401 aa).

11 helical membrane passes run 13–33 (AAGG…ANSP), 59–79 (LLLW…GLEV), 94–114 (ITLP…IYVW), 125–145 (GWAI…TIFG), 154–174 (LFLL…IALF), 178–198 (DLST…FLLN), 209–229 (VLIG…ATLA), 260–280 (WVGF…SLFG), 292–312 (LGIA…VCWI), 332–352 (GVSL…SLAF), and 363–383 (VKAG…VLLA).

The protein belongs to the NhaA Na(+)/H(+) (TC 2.A.33) antiporter family.

It is found in the cell inner membrane. It carries out the reaction Na(+)(in) + 2 H(+)(out) = Na(+)(out) + 2 H(+)(in). Its function is as follows. Na(+)/H(+) antiporter that extrudes sodium in exchange for external protons. The sequence is that of Na(+)/H(+) antiporter NhaA 2 from Pseudoalteromonas atlantica (strain T6c / ATCC BAA-1087).